A 331-amino-acid chain; its full sequence is UBX domain-containing protein 2B (331 aa).

Composition is skewed to basic and acidic residues over residues M1–S16 and D37–R48. Residues M1–K70 are disordered. N-acetylalanine is present on A2. S56 is subject to Phosphoserine. The residue at position 59 (T59) is a Phosphothreonine. S66 is subject to Phosphoserine. The SEP domain occupies D141–I206. S231, S234, and S235 each carry phosphoserine. The 78-residue stretch at D252–Q329 folds into the UBX domain.

The protein belongs to the NSFL1C family. In terms of assembly, interacts with VCP. Does not bind ubiquitin.

It is found in the nucleus. The protein resides in the cytoplasm. The protein localises to the cytosol. It localises to the endoplasmic reticulum. Its subcellular location is the golgi apparatus. It is found in the cytoskeleton. The protein resides in the microtubule organizing center. The protein localises to the centrosome. Functionally, adapter protein required for Golgi and endoplasmic reticulum biogenesis. Involved in Golgi and endoplasmic reticulum maintenance during interphase and in their reassembly at the end of mitosis. The complex formed with VCP has membrane fusion activity; membrane fusion activity requires USO1-GOLGA2 tethering and BET1L. VCPIP1 is also required, but not its deubiquitinating activity. Together with NSFL1C/p47, regulates the centrosomal levels of kinase AURKA/Aurora A during mitotic progression by promoting AURKA removal from centrosomes in prophase. Also, regulates spindle orientation during mitosis. This chain is UBX domain-containing protein 2B (Ubxn2b), found in Mus musculus (Mouse).